The following is a 538-amino-acid chain: Phosphoenolpyruvate carboxykinase (ATP) (538 aa).

Substrate contacts are provided by arginine 64, tyrosine 205, and lysine 211. ATP is bound by residues lysine 211, histidine 230, and 246 to 254 (GLSGTGKTT). Residues lysine 211 and histidine 230 each contribute to the Mn(2+) site. A Mn(2+)-binding site is contributed by aspartate 267. ATP is bound by residues glutamate 295, arginine 331, 447–448 (RI), and threonine 453. Residue arginine 331 coordinates substrate.

It belongs to the phosphoenolpyruvate carboxykinase (ATP) family. As to quaternary structure, monomer. The cofactor is Mn(2+).

The protein resides in the cytoplasm. It catalyses the reaction oxaloacetate + ATP = phosphoenolpyruvate + ADP + CO2. The protein operates within carbohydrate biosynthesis; gluconeogenesis. Involved in the gluconeogenesis. Catalyzes the conversion of oxaloacetate (OAA) to phosphoenolpyruvate (PEP) through direct phosphoryl transfer between the nucleoside triphosphate and OAA. The sequence is that of Phosphoenolpyruvate carboxykinase (ATP) from Haemophilus influenzae (strain PittEE).